Consider the following 703-residue polypeptide: Elongation factor G (703 aa).

Positions 9-292 constitute a tr-type G domain; sequence ERTRNIGIMA…AVVDYLPGPL (284 aa). Residues 18-25, 91-95, and 145-148 contribute to the GTP site; these read AHIDAGKT, DTPGH, and NKMD.

It belongs to the TRAFAC class translation factor GTPase superfamily. Classic translation factor GTPase family. EF-G/EF-2 subfamily.

Its subcellular location is the cytoplasm. Functionally, catalyzes the GTP-dependent ribosomal translocation step during translation elongation. During this step, the ribosome changes from the pre-translocational (PRE) to the post-translocational (POST) state as the newly formed A-site-bound peptidyl-tRNA and P-site-bound deacylated tRNA move to the P and E sites, respectively. Catalyzes the coordinated movement of the two tRNA molecules, the mRNA and conformational changes in the ribosome. The protein is Elongation factor G of Leuconostoc citreum (strain KM20).